The following is a 321-amino-acid chain: Lipoyl synthase (321 aa).

Positions 68, 73, 79, 94, 98, 101, and 308 each coordinate [4Fe-4S] cluster. One can recognise a Radical SAM core domain in the interval 80 to 297 (FNHGTATFMI…KEVALELGFT (218 aa)).

Belongs to the radical SAM superfamily. Lipoyl synthase family. [4Fe-4S] cluster is required as a cofactor.

The protein resides in the cytoplasm. It catalyses the reaction [[Fe-S] cluster scaffold protein carrying a second [4Fe-4S](2+) cluster] + N(6)-octanoyl-L-lysyl-[protein] + 2 oxidized [2Fe-2S]-[ferredoxin] + 2 S-adenosyl-L-methionine + 4 H(+) = [[Fe-S] cluster scaffold protein] + N(6)-[(R)-dihydrolipoyl]-L-lysyl-[protein] + 4 Fe(3+) + 2 hydrogen sulfide + 2 5'-deoxyadenosine + 2 L-methionine + 2 reduced [2Fe-2S]-[ferredoxin]. It participates in protein modification; protein lipoylation via endogenous pathway; protein N(6)-(lipoyl)lysine from octanoyl-[acyl-carrier-protein]: step 2/2. In terms of biological role, catalyzes the radical-mediated insertion of two sulfur atoms into the C-6 and C-8 positions of the octanoyl moiety bound to the lipoyl domains of lipoate-dependent enzymes, thereby converting the octanoylated domains into lipoylated derivatives. The chain is Lipoyl synthase from Vibrio parahaemolyticus serotype O3:K6 (strain RIMD 2210633).